The following is a 143-amino-acid chain: ATP synthase epsilon chain (143 aa).

It belongs to the ATPase epsilon chain family. As to quaternary structure, F-type ATPases have 2 components, CF(1) - the catalytic core - and CF(0) - the membrane proton channel. CF(1) has five subunits: alpha(3), beta(3), gamma(1), delta(1), epsilon(1). CF(0) has three main subunits: a, b and c.

It localises to the cell inner membrane. In terms of biological role, produces ATP from ADP in the presence of a proton gradient across the membrane. The sequence is that of ATP synthase epsilon chain from Dichelobacter nodosus (strain VCS1703A).